Consider the following 512-residue polypeptide: Glycerol kinase 1 (512 aa).

Threonine 18 contacts ADP. Positions 18, 19, and 20 each coordinate ATP. Threonine 18 is a sn-glycerol 3-phosphate binding site. Arginine 22 lines the ADP pocket. Sn-glycerol 3-phosphate-binding residues include arginine 88, glutamate 89, tyrosine 140, and aspartate 255. Residues arginine 88, glutamate 89, tyrosine 140, aspartate 255, and glutamine 256 each coordinate glycerol. ADP is bound by residues threonine 277 and glycine 321. ATP is bound by residues threonine 277, glycine 321, glutamine 325, and glycine 422. Glycine 422 and asparagine 426 together coordinate ADP.

This sequence belongs to the FGGY kinase family.

It catalyses the reaction glycerol + ATP = sn-glycerol 3-phosphate + ADP + H(+). The protein operates within polyol metabolism; glycerol degradation via glycerol kinase pathway; sn-glycerol 3-phosphate from glycerol: step 1/1. With respect to regulation, inhibited by fructose 1,6-bisphosphate (FBP). In terms of biological role, key enzyme in the regulation of glycerol uptake and metabolism. Catalyzes the phosphorylation of glycerol to yield sn-glycerol 3-phosphate. The protein is Glycerol kinase 1 of Streptomyces avermitilis (strain ATCC 31267 / DSM 46492 / JCM 5070 / NBRC 14893 / NCIMB 12804 / NRRL 8165 / MA-4680).